A 1129-amino-acid polypeptide reads, in one-letter code: SMC5-SMC6 complex localization factor protein 2 (1129 aa).

Disordered stretches follow at residues 71–178, 312–343, and 955–1057; these read VKAR…SILN, NTSSSSHYKESVTGRSSPHQHDLSSTSFTEQA, and MLYD…QLEG. The segment covering 72-87 has biased composition (basic residues); the sequence is KARRHTLPHSSHRRSP. Over residues 93–110 the composition is skewed to polar residues; sequence LLFQQRPRNSSGQFTHNP. Basic and acidic residues-rich tracts occupy residues 112 to 130 and 149 to 166; these read QKKDRMDNRDHKTSIKKEL and RKSEASTGSERETKRPRV. Polar residues-rich tracts occupy residues 169–178 and 324–343; these read QATSSSSILN and TGRSSPHQHDLSSTSFTEQA. Composition is skewed to acidic residues over residues 999-1014 and 1033-1048; these read ESEEDDQSKDEEEEDW and SAEDCVEDVSDAEEES.

It belongs to the FAM178 family.

It is found in the nucleus. Functionally, plays a role in the DNA damage response (DDR) pathway by regulating postreplication repair of UV-damaged DNA and genomic stability maintenance. Promotes the recruitment of the SMC5-SMC6 complex to DNA lesions. The sequence is that of SMC5-SMC6 complex localization factor protein 2 (slf2) from Danio rerio (Zebrafish).